Here is a 426-residue protein sequence, read N- to C-terminus: Histidine--tRNA ligase (426 aa).

The protein belongs to the class-II aminoacyl-tRNA synthetase family. Homodimer.

It localises to the cytoplasm. It catalyses the reaction tRNA(His) + L-histidine + ATP = L-histidyl-tRNA(His) + AMP + diphosphate + H(+). This Legionella pneumophila subsp. pneumophila (strain Philadelphia 1 / ATCC 33152 / DSM 7513) protein is Histidine--tRNA ligase.